Reading from the N-terminus, the 377-residue chain is Transcription factor ast-1 (377 aa).

Positions 72-143 (PNRMLYNDNT…SNGSSSSTES (72 aa)) are disordered. 2 stretches are compositionally biased toward low complexity: residues 96 to 109 (STSASSSGNSTSSK) and 118 to 142 (TESSNSSGNGAAATSGSNGSSSSTE). The segment at residues 214–294 (TQLWQFLLEL…HGKRYAYKFD (81 aa)) is a DNA-binding region (ETS).

It belongs to the ETS family. Expressed in the A-neurons in the male-specific genital sensilla (simple sense organs) known as rays.

It is found in the nucleus. The protein resides in the cell projection. The protein localises to the neuron projection. In terms of biological role, transcription factor. Probably binds to DNA sequences containing the consensus motif 5'-CGGA[AT][AG]-3'. Positively modulates expression of dopamine pathway genes, acting as a terminal selector for differentiation of dopaminergic neurons; may act in concert with homeobox proteins ceh-40, ceh-43 and ceh-20. Required for axon navigation in some interneurons, perhaps acting in the same pathways as basement membrane protein nid-1 and unc-6/netrin. Plays a role in the differentiation of the ventral cord pioneer neuron AVG. Required for morphogenesis of the pharynx. In Caenorhabditis elegans, this protein is Transcription factor ast-1.